A 106-amino-acid polypeptide reads, in one-letter code: Toxin-like structure LSTX-D3 (106 aa).

The signal sequence occupies residues 1 to 20 (MMKVLVVVALLVTLISYSSS). Residues 21 to 41 (EGIDDLEADELLSLMANEQTR) constitute a propeptide that is removed on maturation. 4 disulfides stabilise this stretch: Cys-45–Cys-60, Cys-52–Cys-69, Cys-59–Cys-85, and Cys-71–Cys-83.

Belongs to the neurotoxin 19 (CSTX) family. 02 (D7) subfamily. In terms of tissue distribution, expressed by the venom gland.

It is found in the secreted. The sequence is that of Toxin-like structure LSTX-D3 from Lycosa singoriensis (Wolf spider).